Here is a 385-residue protein sequence, read N- to C-terminus: Flap endonuclease 1 (385 aa).

Residues 1–104 (MGILGLSKLI…GELAKRAERR (104 aa)) form an N-domain region. Asp34 is a Mg(2+) binding site. Residues Arg47 and Arg70 each contribute to the DNA site. Asp86, Glu158, Glu160, Asp179, and Asp181 together coordinate Mg(2+). The segment at 122–253 (GIEKFNRRLV…KRAIELINTY (132 aa)) is I-domain. Glu158 serves as a coordination point for DNA. Residues Gly231 and Asp233 each contribute to the DNA site. Asp233 contacts Mg(2+). The tract at residues 336 to 344 (TQVRLDSFF) is interaction with PCNA. The segment at 346-385 (TLPSTPNATNAAKRKADEAKKSANNKKAKTSGGGRGRRPK) is disordered. Basic residues predominate over residues 368–385 (ANNKKAKTSGGGRGRRPK).

Belongs to the XPG/RAD2 endonuclease family. FEN1 subfamily. Interacts with PCNA. Three molecules of FEN1 bind to one PCNA trimer with each molecule binding to one PCNA monomer. PCNA stimulates the nuclease activity without altering cleavage specificity. Mg(2+) serves as cofactor. In terms of processing, phosphorylated. Phosphorylation upon DNA damage induces relocalization to the nuclear plasma.

Its subcellular location is the nucleus. The protein localises to the nucleolus. The protein resides in the nucleoplasm. It is found in the mitochondrion. Structure-specific nuclease with 5'-flap endonuclease and 5'-3' exonuclease activities involved in DNA replication and repair. During DNA replication, cleaves the 5'-overhanging flap structure that is generated by displacement synthesis when DNA polymerase encounters the 5'-end of a downstream Okazaki fragment. It enters the flap from the 5'-end and then tracks to cleave the flap base, leaving a nick for ligation. Also involved in the long patch base excision repair (LP-BER) pathway, by cleaving within the apurinic/apyrimidinic (AP) site-terminated flap. Acts as a genome stabilization factor that prevents flaps from equilibrating into structures that lead to duplications and deletions. Also possesses 5'-3' exonuclease activity on nicked or gapped double-stranded DNA, and exhibits RNase H activity. Also involved in replication and repair of rDNA and in repairing mitochondrial DNA. The sequence is that of Flap endonuclease 1 from Drosophila sechellia (Fruit fly).